The primary structure comprises 68 residues: Peptide Smp13 (68 aa).

A signal peptide spans 1-23 (MKTQFAIFLITLVLFQMFSQSDA). Phenylalanine 36 bears the Phenylalanine amide mark. A propeptide spanning residues 37–68 (GKRGLGDHDDLDELFDGEISQADIDFLKEIMQ) is cleaved from the precursor.

It belongs to the non-disulfide-bridged peptide (NDBP) superfamily. Short antimicrobial peptide (group 4) family. Expressed by the venom gland.

It localises to the secreted. In terms of biological role, peptide with unknown function. Does not show antimicrobial activity against the Gram-positive, and Gram-negative bacteria tested, as well as against the fungus C.albicans. In Scorpio palmatus (Israeli golden scorpion), this protein is Peptide Smp13.